Consider the following 196-residue polypeptide: Fucoxanthin-chlorophyll a-c binding protein A, chloroplastic (196 aa).

The N-terminal 31 residues, 1 to 31 (MKFAVFASLLASRAAFAPAQQSARTSVATNM), are a transit peptide targeting the chloroplast. Transmembrane regions (helical) follow at residues 73 to 94 (ICMLAVAGYLTQEAGIRLPGDI), 114 to 134 (VPGAGIAQIIAFIGFFEIAVM), and 174 to 196 (GRAAQMGILALMVHEQLGVSILP).

This sequence belongs to the fucoxanthin chlorophyll protein family. The LHC complex of chromophytic algae is composed of fucoxanthin, chlorophyll A and C bound non-covalently by fucoxanthin chlorophyll proteins (FCPs). The ratio of the pigments in LHC; fucoxanthin: chlorophyll C: chlorophyll A; (0.6-1): (0.1-0.3): (1).

It is found in the plastid. The protein resides in the chloroplast thylakoid membrane. In terms of biological role, the light-harvesting complex (LHC) functions as a light receptor, it captures and delivers excitation energy to photosystems with which it is closely associated. Energy is transferred from the carotenoid and chlorophyll C (or B) to chlorophyll A and the photosynthetic reaction centers where it is used to synthesize ATP and reducing power. This Phaeodactylum tricornutum (Diatom) protein is Fucoxanthin-chlorophyll a-c binding protein A, chloroplastic (FCPA).